The sequence spans 267 residues: AMP/ADP-polyphosphate phosphotransferase (267 aa).

It belongs to the polyphosphate kinase 2 (PPK2) family. Class III subfamily. It depends on Mn(2+) as a cofactor.

The enzyme catalyses [phosphate](n) + ADP = [phosphate](n+1) + AMP. It catalyses the reaction [phosphate](n) + ATP = [phosphate](n+1) + ADP. Its function is as follows. Uses inorganic polyphosphate (polyP) as a donor to convert both AMP to ADP and ADP to ATP. Can also use GMP, CMP, UMP, GDP, CDP and UDP. The polypeptide is AMP/ADP-polyphosphate phosphotransferase (Meiothermus ruber (strain ATCC 35948 / DSM 1279 / VKM B-1258 / 21) (Thermus ruber)).